Reading from the N-terminus, the 248-residue chain is Ras-like protein family member 11B (248 aa).

A small GTPase-like region spans residues 30-248 (ASSRVIKIAV…SSKVRTATSV (219 aa)). GTP-binding positions include 41–48 (GGSGVGKT), 88–99 (DTPGVQINEQNL), and 153–156 (NKAD). Residues 206–228 (QNTGTSERRKNSIIPRPKSPNMQ) form a disordered region.

The protein belongs to the small GTPase superfamily. Ras family.

It carries out the reaction GTP + H2O = GDP + phosphate + H(+). This Xenopus laevis (African clawed frog) protein is Ras-like protein family member 11B.